A 749-amino-acid chain; its full sequence is 5-methyltetrahydropteroyltriglutamate--homocysteine methyltransferase (749 aa).

Residues 15-18 and Lys-114 each bind 5-methyltetrahydropteroyltri-L-glutamate; that span reads RELK. Residues 425 to 427 and Glu-478 each bind L-homocysteine; that span reads IGS. Residues 425-427 and Glu-478 each bind L-methionine; that span reads IGS. Trp-555 is a 5-methyltetrahydropteroyltri-L-glutamate binding site. Asp-593 lines the L-homocysteine pocket. An L-methionine-binding site is contributed by Asp-593. Glu-599 serves as a coordination point for 5-methyltetrahydropteroyltri-L-glutamate. His-636, Cys-638, and Glu-660 together coordinate Zn(2+). His-689 (proton donor) is an active-site residue. Cys-721 is a Zn(2+) binding site.

Belongs to the vitamin-B12 independent methionine synthase family. It depends on Zn(2+) as a cofactor.

It catalyses the reaction 5-methyltetrahydropteroyltri-L-glutamate + L-homocysteine = tetrahydropteroyltri-L-glutamate + L-methionine. It participates in amino-acid biosynthesis; L-methionine biosynthesis via de novo pathway; L-methionine from L-homocysteine (MetE route): step 1/1. In terms of biological role, catalyzes the transfer of a methyl group from 5-methyltetrahydrofolate to homocysteine resulting in methionine formation. This chain is 5-methyltetrahydropteroyltriglutamate--homocysteine methyltransferase, found in Streptococcus pneumoniae serotype 2 (strain D39 / NCTC 7466).